The primary structure comprises 931 residues: Chitin synthase 7 (931 aa).

Disordered regions lie at residues 1 to 34 (MVRH…GHYR) and 56 to 92 (GDVG…ASSS). 2 stretches are compositionally biased toward polar residues: residues 7–28 (FTNS…TPYP) and 83–92 (PLTTGPASSS). The N-linked (GlcNAc...) asparagine glycan is linked to asparagine 536. 3 helical membrane-spanning segments follow: residues 573–593 (IFSL…FSII), 615–635 (INLV…VLAL), and 647–667 (ILTL…SIIL). N-linked (GlcNAc...) asparagine glycosylation occurs at asparagine 691. 2 helical membrane passes run 695 to 715 (GVLV…SFLY) and 725 to 745 (FPQY…YAFC). A disordered region spans residues 763 to 789 (LPAISSSKQKDGETAVVEEQQRSQGEL). Residue asparagine 819 is glycosylated (N-linked (GlcNAc...) asparagine). The chain crosses the membrane as a helical span at residues 826 to 846 (LVVVWLLTNAALAISIQTLNG). Residues asparagine 866 and asparagine 874 are each glycosylated (N-linked (GlcNAc...) asparagine). Residues 899 to 919 (AILWTTFALSMVRFIGCVFYW) form a helical membrane-spanning segment.

Belongs to the chitin synthase family. Class III subfamily.

It localises to the cell membrane. The enzyme catalyses [(1-&gt;4)-N-acetyl-beta-D-glucosaminyl](n) + UDP-N-acetyl-alpha-D-glucosamine = [(1-&gt;4)-N-acetyl-beta-D-glucosaminyl](n+1) + UDP + H(+). In terms of biological role, polymerizes chitin, a structural polymer of the cell wall and septum, by transferring the sugar moiety of UDP-GlcNAc to the non-reducing end of the growing chitin polymer. The polypeptide is Chitin synthase 7 (Cryptococcus neoformans var. grubii serotype A (strain H99 / ATCC 208821 / CBS 10515 / FGSC 9487) (Filobasidiella neoformans var. grubii)).